Reading from the N-terminus, the 290-residue chain is Phosphoribosylaminoimidazole-succinocarboxamide synthase (290 aa).

This sequence belongs to the SAICAR synthetase family.

It catalyses the reaction 5-amino-1-(5-phospho-D-ribosyl)imidazole-4-carboxylate + L-aspartate + ATP = (2S)-2-[5-amino-1-(5-phospho-beta-D-ribosyl)imidazole-4-carboxamido]succinate + ADP + phosphate + 2 H(+). The protein operates within purine metabolism; IMP biosynthesis via de novo pathway; 5-amino-1-(5-phospho-D-ribosyl)imidazole-4-carboxamide from 5-amino-1-(5-phospho-D-ribosyl)imidazole-4-carboxylate: step 1/2. In Haemophilus influenzae (strain PittEE), this protein is Phosphoribosylaminoimidazole-succinocarboxamide synthase.